The following is a 77-amino-acid chain: uncharacterized protein (77 aa).

This is an uncharacterized protein from Acidianus ambivalens (Desulfurolobus ambivalens).